The chain runs to 190 residues: Large ribosomal subunit protein bL9 (190 aa).

It belongs to the bacterial ribosomal protein bL9 family.

Functionally, binds to the 23S rRNA. The polypeptide is Large ribosomal subunit protein bL9 (Methylorubrum populi (strain ATCC BAA-705 / NCIMB 13946 / BJ001) (Methylobacterium populi)).